The chain runs to 213 residues: High frequency lysogenization protein HflD homolog (213 aa).

Residues 79–122 (QGLNAELTRYTLSLMVLERKLSSAKGALNTLGDRINGLQRQLDH) are a coiled coil.

Belongs to the HflD family.

It localises to the cytoplasm. It is found in the cell inner membrane. The protein is High frequency lysogenization protein HflD homolog of Salmonella dublin (strain CT_02021853).